A 468-amino-acid chain; its full sequence is Putative proline/betaine transporter (468 aa).

12 consecutive transmembrane segments (helical) span residues 20–42 (VFAT…YTTA), 63–83 (FAAL…FGII), 91–111 (VVLT…GVLP), 115–135 (MIGL…GFST), 164–184 (IGTL…SFFL), 191–211 (AWGW…GLYL), 246–266 (ILVC…VTAY), 284–304 (VLIT…GKLA), 312–332 (VFLI…SLLN), 336–356 (LPFI…YEAT), 376–396 (VTFN…NSWL), and 403–423 (IYAP…VIAV).

Belongs to the major facilitator superfamily. Metabolite:H+ Symporter (MHS) family (TC 2.A.1.6) family.

The protein resides in the cell membrane. In terms of biological role, may be a proton symporter involved in the uptake of osmolytes such as proline and glycine betaine. The chain is Putative proline/betaine transporter (proP) from Staphylococcus haemolyticus (strain JCSC1435).